The primary structure comprises 259 residues: ATP synthase subunit a (259 aa).

The next 6 membrane-spanning stretches (helical) occupy residues 37 to 57 (LSIT…FLFM), 101 to 121 (YFPA…LGLI), 131 to 151 (LVVT…LAIV), 157 to 177 (FIGF…MVPI), 203 to 223 (VLAI…LMPA), and 232 to 252 (FELF…CVYI).

This sequence belongs to the ATPase A chain family. As to quaternary structure, F-type ATPases have 2 components, CF(1) - the catalytic core - and CF(0) - the membrane proton channel. CF(1) has five subunits: alpha(3), beta(3), gamma(1), delta(1), epsilon(1). CF(0) has three main subunits: a(1), b(2) and c(9-12). The alpha and beta chains form an alternating ring which encloses part of the gamma chain. CF(1) is attached to CF(0) by a central stalk formed by the gamma and epsilon chains, while a peripheral stalk is formed by the delta and b chains.

The protein resides in the cell inner membrane. Functionally, key component of the proton channel; it plays a direct role in the translocation of protons across the membrane. This Magnetococcus marinus (strain ATCC BAA-1437 / JCM 17883 / MC-1) protein is ATP synthase subunit a.